Here is a 273-residue protein sequence, read N- to C-terminus: 4-hydroxy-tetrahydrodipicolinate reductase (273 aa).

Position 11 to 16 (11 to 16 (GAGGRM)) interacts with NAD(+). Arg-37 contributes to the NADP(+) binding site. NAD(+) is bound by residues 100–102 (GTT) and 124–127 (AANY). His-157 acts as the Proton donor/acceptor in catalysis. Position 158 (His-158) interacts with (S)-2,3,4,5-tetrahydrodipicolinate. The active-site Proton donor is Lys-161. 167 to 168 (GT) provides a ligand contact to (S)-2,3,4,5-tetrahydrodipicolinate.

The protein belongs to the DapB family.

It is found in the cytoplasm. The catalysed reaction is (S)-2,3,4,5-tetrahydrodipicolinate + NAD(+) + H2O = (2S,4S)-4-hydroxy-2,3,4,5-tetrahydrodipicolinate + NADH + H(+). It catalyses the reaction (S)-2,3,4,5-tetrahydrodipicolinate + NADP(+) + H2O = (2S,4S)-4-hydroxy-2,3,4,5-tetrahydrodipicolinate + NADPH + H(+). Its pathway is amino-acid biosynthesis; L-lysine biosynthesis via DAP pathway; (S)-tetrahydrodipicolinate from L-aspartate: step 4/4. Catalyzes the conversion of 4-hydroxy-tetrahydrodipicolinate (HTPA) to tetrahydrodipicolinate. This chain is 4-hydroxy-tetrahydrodipicolinate reductase, found in Acinetobacter baumannii (strain AB307-0294).